Reading from the N-terminus, the 371-residue chain is Putative 8-amino-7-oxononanoate synthase (371 aa).

Arg21 contacts substrate. Residue 108–109 (GY) participates in pyridoxal 5'-phosphate binding. Position 133 (His133) interacts with substrate. Pyridoxal 5'-phosphate-binding positions include Ser180, 205-208 (DDAH), and 234-237 (TLSK). At Lys237 the chain carries N6-(pyridoxal phosphate)lysine. Thr333 is a substrate binding site.

The protein belongs to the class-II pyridoxal-phosphate-dependent aminotransferase family. BioF subfamily. In terms of assembly, homodimer. Pyridoxal 5'-phosphate serves as cofactor.

The enzyme catalyses 6-carboxyhexanoyl-[ACP] + L-alanine + H(+) = (8S)-8-amino-7-oxononanoate + holo-[ACP] + CO2. It participates in cofactor biosynthesis; biotin biosynthesis. Functionally, catalyzes the decarboxylative condensation of pimeloyl-[acyl-carrier protein] and L-alanine to produce 8-amino-7-oxononanoate (AON), [acyl-carrier protein], and carbon dioxide. This is Putative 8-amino-7-oxononanoate synthase (bioF) from Bacillus subtilis subsp. natto.